Here is a 344-residue protein sequence, read N- to C-terminus: Beta-hexosaminidase (344 aa).

Substrate is bound by residues aspartate 60, arginine 68, arginine 132, and 162–163 (KH). Catalysis depends on histidine 175, which acts as the Proton donor/acceptor. The Nucleophile role is filled by aspartate 247.

It belongs to the glycosyl hydrolase 3 family. NagZ subfamily.

The protein localises to the cytoplasm. It catalyses the reaction Hydrolysis of terminal non-reducing N-acetyl-D-hexosamine residues in N-acetyl-beta-D-hexosaminides.. It participates in cell wall biogenesis; peptidoglycan recycling. In terms of biological role, plays a role in peptidoglycan recycling by cleaving the terminal beta-1,4-linked N-acetylglucosamine (GlcNAc) from peptide-linked peptidoglycan fragments, giving rise to free GlcNAc, anhydro-N-acetylmuramic acid and anhydro-N-acetylmuramic acid-linked peptides. The chain is Beta-hexosaminidase from Haemophilus ducreyi (strain 35000HP / ATCC 700724).